A 225-amino-acid chain; its full sequence is Histone H3-like centromeric protein cid (225 aa).

Basic residues predominate over residues 1–11 (MPRHSRAKRAP). The interval 1–131 (MPRHSRAKRA…KAANPMSRAK (131 aa)) is disordered. Residues 43-52 (FTTSQLTLQD) are compositionally biased toward polar residues. 2 positions are modified to phosphoserine: S74 and S75. T76 carries the post-translational modification Phosphothreonine. At S77 the chain carries Phosphoserine. Residues 86 to 103 (RYPTTRSPQTRRMTVQQE) show a composition bias toward polar residues. The segment at 133–225 (MDREIRRLQH…AYICDRGRQF (93 aa)) is H3-like.

Belongs to the histone H3 family. Forms a nucleosome-like histone octamer containing two molecules each of H2A, H2B, cid and H4 assembled in one cid-H4 heterotetramer and two H2A-H2B heterodimers. The cid-H4 heterotetramer is more compact and structurally more rigid than corresponding H3-H4 heterotetramers. Interacts with the condensin subunit Cap-G. Interacts with Chrac-14.

Its subcellular location is the nucleus. It is found in the chromosome. The protein resides in the centromere. It localises to the kinetochore. In terms of biological role, histone H3-like variant which exclusively replaces conventional H3 in the nucleosome core of centromeric chromatin at the inner plate of the kinetochore. Required for recruitment and assembly of kinetochore proteins, mitotic progression and chromosome segregation. May serve as an epigenetic mark that propagates centromere identity through replication and cell division. The chain is Histone H3-like centromeric protein cid from Drosophila melanogaster (Fruit fly).